The following is a 491-amino-acid chain: Aspartyl/glutamyl-tRNA(Asn/Gln) amidotransferase subunit B (491 aa).

This sequence belongs to the GatB/GatE family. GatB subfamily. As to quaternary structure, heterotrimer of A, B and C subunits.

It carries out the reaction L-glutamyl-tRNA(Gln) + L-glutamine + ATP + H2O = L-glutaminyl-tRNA(Gln) + L-glutamate + ADP + phosphate + H(+). It catalyses the reaction L-aspartyl-tRNA(Asn) + L-glutamine + ATP + H2O = L-asparaginyl-tRNA(Asn) + L-glutamate + ADP + phosphate + 2 H(+). Functionally, allows the formation of correctly charged Asn-tRNA(Asn) or Gln-tRNA(Gln) through the transamidation of misacylated Asp-tRNA(Asn) or Glu-tRNA(Gln) in organisms which lack either or both of asparaginyl-tRNA or glutaminyl-tRNA synthetases. The reaction takes place in the presence of glutamine and ATP through an activated phospho-Asp-tRNA(Asn) or phospho-Glu-tRNA(Gln). The chain is Aspartyl/glutamyl-tRNA(Asn/Gln) amidotransferase subunit B from Burkholderia ambifaria (strain ATCC BAA-244 / DSM 16087 / CCUG 44356 / LMG 19182 / AMMD) (Burkholderia cepacia (strain AMMD)).